Reading from the N-terminus, the 243-residue chain is Zinc import ATP-binding protein ZnuC (243 aa).

The ABC transporter domain maps to 4-219; sequence IAAHHLAVRR…PEYRALFGHG (216 aa). Residue 36–43 coordinates ATP; the sequence is GPNGSGKS.

Belongs to the ABC transporter superfamily. Zinc importer (TC 3.A.1.15.5) family. As to quaternary structure, the complex is composed of two ATP-binding proteins (ZnuC), two transmembrane proteins (ZnuB) and a solute-binding protein (ZnuA).

Its subcellular location is the cell inner membrane. The enzyme catalyses Zn(2+)(out) + ATP(in) + H2O(in) = Zn(2+)(in) + ADP(in) + phosphate(in) + H(+)(in). Its function is as follows. Part of the ABC transporter complex ZnuABC involved in zinc import. Responsible for energy coupling to the transport system. In Cereibacter sphaeroides (strain ATCC 17023 / DSM 158 / JCM 6121 / CCUG 31486 / LMG 2827 / NBRC 12203 / NCIMB 8253 / ATH 2.4.1.) (Rhodobacter sphaeroides), this protein is Zinc import ATP-binding protein ZnuC.